The chain runs to 249 residues: ATP synthase subunit a, chloroplastic (249 aa).

The next 5 membrane-spanning stretches (helical) occupy residues G38–A58, V97–I117, I136–S156, L201–L221, and G222–G242.

This sequence belongs to the ATPase A chain family. F-type ATPases have 2 components, CF(1) - the catalytic core - and CF(0) - the membrane proton channel. CF(1) has five subunits: alpha(3), beta(3), gamma(1), delta(1), epsilon(1). CF(0) has four main subunits: a, b, b' and c.

Its subcellular location is the plastid. It is found in the chloroplast thylakoid membrane. Its function is as follows. Key component of the proton channel; it plays a direct role in the translocation of protons across the membrane. The sequence is that of ATP synthase subunit a, chloroplastic from Chlorokybus atmophyticus (Soil alga).